We begin with the raw amino-acid sequence, 220 residues long: Deoxyribose-phosphate aldolase (220 aa).

Asp89 (proton donor/acceptor) is an active-site residue. Lys151 functions as the Schiff-base intermediate with acetaldehyde in the catalytic mechanism. Lys180 (proton donor/acceptor) is an active-site residue.

Belongs to the DeoC/FbaB aldolase family. DeoC type 1 subfamily.

It localises to the cytoplasm. It carries out the reaction 2-deoxy-D-ribose 5-phosphate = D-glyceraldehyde 3-phosphate + acetaldehyde. It participates in carbohydrate degradation; 2-deoxy-D-ribose 1-phosphate degradation; D-glyceraldehyde 3-phosphate and acetaldehyde from 2-deoxy-alpha-D-ribose 1-phosphate: step 2/2. Catalyzes a reversible aldol reaction between acetaldehyde and D-glyceraldehyde 3-phosphate to generate 2-deoxy-D-ribose 5-phosphate. In Lactococcus lactis subsp. lactis (strain IL1403) (Streptococcus lactis), this protein is Deoxyribose-phosphate aldolase.